Here is a 456-residue protein sequence, read N- to C-terminus: RuvB-like 1 (456 aa).

Lysine 2 participates in a covalent cross-link: Glycyl lysine isopeptide (Lys-Gly) (interchain with G-Cter in SUMO2). 70–77 (GPPGTGKT) is an ATP binding site. A Glycyl lysine isopeptide (Lys-Gly) (interchain with G-Cter in SUMO1); alternate cross-link involves residue lysine 225. Lysine 225 participates in a covalent cross-link: Glycyl lysine isopeptide (Lys-Gly) (interchain with G-Cter in SUMO2); alternate. Residue lysine 445 forms a Glycyl lysine isopeptide (Lys-Gly) (interchain with G-Cter in SUMO2) linkage. Residue lysine 453 is modified to N6-acetyllysine.

The protein belongs to the RuvB family. Forms homohexameric rings. Can form a dodecamer with RUVBL2 made of two stacked hexameric rings; however, even though RUVBL1 and RUVBL2 are present in equimolar ratio, the oligomeric status of each hexamer is not known. Oligomerization may regulate binding to nucleic acids and conversely, binding to nucleic acids may affect the dodecameric assembly. Interaction of the complex with DHX34 results in conformational changes of the N-terminus of the RUVBL2 subunits, resulting in loss of nucleotide binding ability and ATP hydrolysis of the complex. Interacts with the transcriptional activation domain of MYC. Component of the RNA polymerase II holoenzyme complex. May also act to bridge the LEF1/TCF1-CTNNB1 complex and TBP. Component of the NuA4 histone acetyltransferase complex which contains the catalytic subunit KAT5/TIP60 and the subunits EP400, TRRAP/PAF400, BRD8/SMAP, EPC1, DMAP1/DNMAP1, RUVBL1/TIP49, RUVBL2, ING3, actin, ACTL6A/BAF53A, MORF4L1/MRG15, MORF4L2/MRGX, MRGBP, YEATS4/GAS41, VPS72/YL1 and MEAF6. The NuA4 complex interacts with MYC and the adenovirus E1A protein. RUVBL1 interacts with EP400. Component of a NuA4-related complex which contains EP400, TRRAP/PAF400, SRCAP, BRD8/SMAP, EPC1, DMAP1/DNMAP1, RUVBL1/TIP49, RUVBL2, actin, ACTL6A/BAF53A, VPS72 and YEATS4/GAS41. Component of the BAF53 complex, at least composed of ACTL6A/BAF53A, RUVBL1/TIP49, SMARCA2/BRM, and TRRAP/PAF400. Component of some MLL1/MLL complex, at least composed of the core components KMT2A/MLL1, ASH2L, HCFC1/HCF1, WDR5 and RBBP5, as well as the facultative components BACC1, CHD8, E2F6, HSP70, INO80C, KANSL1, LAS1L, MAX, MCRS1, MGA, MYST1/MOF, PELP1, PHF20, PRP31, RING2, RUVB1/TIP49A, RUVB2/TIP49B, SENP3, TAF1, TAF4, TAF6, TAF7, TAF9 and TEX10. Associates with alpha and gamma tubulins, particularly during metaphase and early anaphase. Interacts with NPAT. Component of the chromatin-remodeling INO80 complex; specifically part of a complex module associated with the helicase ATP-binding and the helicase C-terminal domain of INO80. Interacts with IGHMBP2. Interacts with OFD1. Interacts with HINT1. Component of a complex with USP49 and PSMC5. Component of a SWR1-like complex. Component of the R2TP complex composed at least of RUVBL1, RUVBL2, RPAP3 and PIHD1. Component of the PAQosome complex which is responsible for the biogenesis of several protein complexes and which consists of R2TP complex members RUVBL1, RUVBL2, RPAP3 and PIH1D1, URI complex members PFDN2, PFDN6, PDRG1, UXT and URI1 as well as ASDURF, POLR2E and DNAAF10/WDR92. Interacts with PIH1D1. Interacts with ITFG1. Interacts with WAC; WAC positively regulates MTOR activity by promoting the assembly of the TTT complex composed of TELO2, TTI1 and TTI2 and the RUVBL complex composed of RUVBL1 and RUVBL2 into the TTT-RUVBL complex which leads to the dimerization of the mTORC1 complex and its subsequent activation. The RUVBL1/RUVBL2 complex interacts with ZNHIT1 (via HIT-type zinc finger), ZNHIT3 (via HIT-type zinc finger), ZNHIT6 (via HIT-type zinc finger) and DDX59/ZNHIT5 (via HIT-type zinc finger) in the presence of ADP. Interacts with NOPCHAP1; the interaction is direct and disrupted upon ATP binding. Interacts with SMG1. Interacts with NOP2, NOP56 and NUFIP1. In terms of assembly, (Microbial infection) Interacts with Mumps L polymerase; this interaction regulates the viral transcription. As to expression, ubiquitously expressed with high expression in heart, skeletal muscle and testis.

It is found in the nucleus matrix. Its subcellular location is the nucleus. The protein resides in the nucleoplasm. It localises to the cytoplasm. The protein localises to the membrane. It is found in the cytoskeleton. Its subcellular location is the microtubule organizing center. The protein resides in the centrosome. It localises to the dynein axonemal particle. The enzyme catalyses ATP + H2O = ADP + phosphate + H(+). Its function is as follows. Possesses single-stranded DNA-stimulated ATPase and ATP-dependent DNA helicase (3' to 5') activity; hexamerization is thought to be critical for ATP hydrolysis and adjacent subunits in the ring-like structure contribute to the ATPase activity. Component of the NuA4 histone acetyltransferase complex which is involved in transcriptional activation of select genes principally by acetylation of nucleosomal histones H4 and H2A. This modification may both alter nucleosome-DNA interactions and promote interaction of the modified histones with other proteins which positively regulate transcription. This complex may be required for the activation of transcriptional programs associated with oncogene and proto-oncogene mediated growth induction, tumor suppressor mediated growth arrest and replicative senescence, apoptosis, and DNA repair. The NuA4 complex ATPase and helicase activities seem to be, at least in part, contributed by the association of RUVBL1 and RUVBL2 with EP400. NuA4 may also play a direct role in DNA repair when recruited to sites of DNA damage. Component of a SWR1-like complex that specifically mediates the removal of histone H2A.Z/H2AZ1 from the nucleosome. Proposed core component of the chromatin remodeling INO80 complex which exhibits DNA- and nucleosome-activated ATPase activity and catalyzes ATP-dependent nucleosome sliding. Plays an essential role in oncogenic transformation by MYC and also modulates transcriptional activation by the LEF1/TCF1-CTNNB1 complex. Essential for cell proliferation. May be able to bind plasminogen at cell surface and enhance plasminogen activation. This Homo sapiens (Human) protein is RuvB-like 1.